The sequence spans 188 residues: Threonylcarbamoyl-AMP synthase (188 aa).

The YrdC-like domain occupies 4–188 (VENLQQAVDA…ARSLQVLRQG (185 aa)).

Belongs to the SUA5 family. TsaC subfamily.

The protein resides in the cytoplasm. It carries out the reaction L-threonine + hydrogencarbonate + ATP = L-threonylcarbamoyladenylate + diphosphate + H2O. In terms of biological role, required for the formation of a threonylcarbamoyl group on adenosine at position 37 (t(6)A37) in tRNAs that read codons beginning with adenine. Catalyzes the conversion of L-threonine, HCO(3)(-)/CO(2) and ATP to give threonylcarbamoyl-AMP (TC-AMP) as the acyladenylate intermediate, with the release of diphosphate. This chain is Threonylcarbamoyl-AMP synthase, found in Vibrio cholerae serotype O1 (strain ATCC 39541 / Classical Ogawa 395 / O395).